A 235-amino-acid chain; its full sequence is 1-Cys peroxiredoxin (235 aa).

Positions 5 to 179 (ILLGDKFPDF…ILRVVDSLQL (175 aa)) constitute a Thioredoxin domain. Cysteine 49 is an active-site residue. Cysteine 49 (cysteine sulfenic acid (-SOH) intermediate) is an active-site residue.

It belongs to the peroxiredoxin family. Prx6 subfamily.

The protein resides in the cytoplasm. It catalyses the reaction a hydroperoxide + [protein]-dithiol = [protein]-disulfide + an alcohol + H2O. Functionally, thiol-specific peroxidase that catalyzes the reduction of hydrogen peroxide and organic hydroperoxides to water and alcohols, respectively. Plays a role in cell protection against oxidative stress by detoxifying peroxides. This Dirofilaria immitis (Canine heartworm) protein is 1-Cys peroxiredoxin.